Reading from the N-terminus, the 292-residue chain is Aquaporin-3 (292 aa).

Residues 1–24 (MGRQKELMNRCGEMLHIRYRLLRQ) lie on the Cytoplasmic side of the membrane. Residues 25 to 42 (ALAECLGTLILVMFGCGS) form a helical membrane-spanning segment. Residues 43-56 (VAQVVLSRGTHGGF) lie on the Extracellular side of the membrane. A helical membrane pass occupies residues 57 to 74 (LTINLAFGFAVTLGILVA). Residues 75–78 (GQVS) are Cytoplasmic-facing. The discontinuously helical intramembrane region spans 79 to 92 (GAHLNPAVTFAMCF). An NPA 1 motif is present at residues 83 to 85 (NPA). Topologically, residues 93 to 100 (LAREPWIK) are cytoplasmic. The helical transmembrane segment at 101-121 (LPIYALAQTLGAFLGAGIVFG) threads the bilayer. Over 122 to 159 (LYYDAIWAFANNELFVSGPNGTAGIFATYPSGHLDMVN) the chain is Extracellular. The N-linked (GlcNAc...) asparagine glycan is linked to asparagine 141. A helical transmembrane segment spans residues 160 to 177 (GFFDQFIGTAALIVCVLA). Over 178–189 (IVDPYNNPVPRG) the chain is Cytoplasmic. A helical transmembrane segment spans residues 190 to 206 (LEAFTVGLVVLVIGTSM). Over 207 to 210 (GFNS) the chain is Extracellular. The segment at residues 211–224 (GYAVNPARDFGPRL) is an intramembrane region (discontinuously helical). An NPA 2 motif is present at residues 215–217 (NPA). Over 225-242 (FTALAGWGSEVFTTGRHW) the chain is Extracellular. The chain crosses the membrane as a helical span at residues 243 to 264 (WWVPIVSPLLGSIAGVFVYQLM). The Cytoplasmic segment spans residues 265–292 (IGCHLEQPPPSTEEENVKLAHMKHKEQI).

This sequence belongs to the MIP/aquaporin (TC 1.A.8) family. As to quaternary structure, homotetramer; each monomer provides an independent glycerol/water pore. Could also exist in other oligomeric states. Detected in principal cells in collecting ducts in kidney medulla (at protein level). Renal medulla and colon. Predominantly in the inner medulla. Expressed in basal layer of epidermal keratinocytes.

It localises to the cell membrane. It is found in the basolateral cell membrane. The enzyme catalyses glycerol(in) = glycerol(out). It carries out the reaction H2O(in) = H2O(out). The catalysed reaction is urea(in) = urea(out). It catalyses the reaction H2O2(out) = H2O2(in). Aquaglyceroporins form homotetrameric transmembrane channels, with each monomer independently mediating glycerol and water transport across the plasma membrane along their osmotic gradient. Could also be permeable to urea. Also participates in cell permeability to H2O2 and H2O2-mediated signaling. In skin, transports glycerol to the epidermis and stratum corneum, where it maintains hydration, elasticity, and supports lipid biosynthesis for barrier repair. In kidney, contributes to the reabsorption of water, helping the body maintain proper fluid balance. The protein is Aquaporin-3 of Mus musculus (Mouse).